Reading from the N-terminus, the 214-residue chain is Adenylate kinase (214 aa).

Residue 10-15 participates in ATP binding; that stretch reads GAGKGT. Positions 30–59 are NMP; it reads STGDMLRAAIKAGTELGLKAKAVMDAGQLV. Residues Thr31, Arg36, 57–59, 85–88, and Gln92 contribute to the AMP site; these read QLV and GFPR. The LID stretch occupies residues 122 to 159; it reads GRRVHSGSGRTYHVVFNPPKVEGKDDVTGEDLVIRADD. ATP contacts are provided by residues Arg123 and 132 to 133; that span reads TY. AMP is bound by residues Arg156 and Arg167. Position 200 (Gln200) interacts with ATP.

Belongs to the adenylate kinase family. As to quaternary structure, monomer.

Its subcellular location is the cytoplasm. It catalyses the reaction AMP + ATP = 2 ADP. Its pathway is purine metabolism; AMP biosynthesis via salvage pathway; AMP from ADP: step 1/1. Functionally, catalyzes the reversible transfer of the terminal phosphate group between ATP and AMP. Plays an important role in cellular energy homeostasis and in adenine nucleotide metabolism. The polypeptide is Adenylate kinase (Aeromonas hydrophila subsp. hydrophila (strain ATCC 7966 / DSM 30187 / BCRC 13018 / CCUG 14551 / JCM 1027 / KCTC 2358 / NCIMB 9240 / NCTC 8049)).